Consider the following 168-residue polypeptide: Crossover junction endodeoxyribonuclease RuvC (168 aa).

Catalysis depends on residues aspartate 8, glutamate 68, and aspartate 140. Mg(2+) contacts are provided by aspartate 8, glutamate 68, and aspartate 140.

The protein belongs to the RuvC family. Homodimer which binds Holliday junction (HJ) DNA. The HJ becomes 2-fold symmetrical on binding to RuvC with unstacked arms; it has a different conformation from HJ DNA in complex with RuvA. In the full resolvosome a probable DNA-RuvA(4)-RuvB(12)-RuvC(2) complex forms which resolves the HJ. It depends on Mg(2+) as a cofactor.

The protein localises to the cytoplasm. It carries out the reaction Endonucleolytic cleavage at a junction such as a reciprocal single-stranded crossover between two homologous DNA duplexes (Holliday junction).. Its function is as follows. The RuvA-RuvB-RuvC complex processes Holliday junction (HJ) DNA during genetic recombination and DNA repair. Endonuclease that resolves HJ intermediates. Cleaves cruciform DNA by making single-stranded nicks across the HJ at symmetrical positions within the homologous arms, yielding a 5'-phosphate and a 3'-hydroxyl group; requires a central core of homology in the junction. The consensus cleavage sequence is 5'-(A/T)TT(C/G)-3'. Cleavage occurs on the 3'-side of the TT dinucleotide at the point of strand exchange. HJ branch migration catalyzed by RuvA-RuvB allows RuvC to scan DNA until it finds its consensus sequence, where it cleaves and resolves the cruciform DNA. This Gluconacetobacter diazotrophicus (strain ATCC 49037 / DSM 5601 / CCUG 37298 / CIP 103539 / LMG 7603 / PAl5) protein is Crossover junction endodeoxyribonuclease RuvC.